Here is a 142-residue protein sequence, read N- to C-terminus: Large ribosomal subunit protein bL19 (142 aa).

Belongs to the bacterial ribosomal protein bL19 family.

In terms of biological role, this protein is located at the 30S-50S ribosomal subunit interface and may play a role in the structure and function of the aminoacyl-tRNA binding site. In Psychrobacter cryohalolentis (strain ATCC BAA-1226 / DSM 17306 / VKM B-2378 / K5), this protein is Large ribosomal subunit protein bL19.